Here is a 203-residue protein sequence, read N- to C-terminus: MMSFSTSLILASGSSARRMLLENAGLAVQARPVDLDEEALRRSCEEQGHTLSQTAIALADAKANLATRDVGFDELTVAADQILDLDGVAFAKPGSVAEAAEHLRRLRGRTHVLRTAVVLYKGGEKVWEHLASPRLTMRDFSDDFLKAYLEREGPAILSCVGAYRLEGPGIQLFSAVEGVQDAVMGLPLLPLLEELRELKVLAA.

D80 serves as the catalytic Proton acceptor.

The protein belongs to the Maf family. Requires a divalent metal cation as cofactor.

It localises to the cytoplasm. The enzyme catalyses a ribonucleoside 5'-triphosphate + H2O = a ribonucleoside 5'-phosphate + diphosphate + H(+). It catalyses the reaction a 2'-deoxyribonucleoside 5'-triphosphate + H2O = a 2'-deoxyribonucleoside 5'-phosphate + diphosphate + H(+). Its function is as follows. Nucleoside triphosphate pyrophosphatase. May have a dual role in cell division arrest and in preventing the incorporation of modified nucleotides into cellular nucleic acids. This is Nucleoside triphosphate pyrophosphatase from Gluconobacter oxydans (strain 621H) (Gluconobacter suboxydans).